The sequence spans 138 residues: Protein NrdI (138 aa).

The protein belongs to the NrdI family.

Its function is as follows. Probably involved in ribonucleotide reductase function. This Mycobacterium leprae (strain TN) protein is Protein NrdI.